We begin with the raw amino-acid sequence, 576 residues long: Cilia- and flagella-associated protein 100 (576 aa).

The segment at 1 to 29 (MPIYDEASVPGTAAGRSTTDVGATAGANP) is disordered. 3 coiled-coil regions span residues 125–226 (IFLL…CRRY), 254–311 (VAEW…IMKE), and 342–408 (YKQL…LKDR). Disordered regions lie at residues 417 to 439 (TLSMGSSNAPTSSVTGSSGPGGP), 495 to 519 (AEKAREKDRRKVARDEKLSTQHREH), and 538 to 563 (TGKPLMFRSAPPQRKKVVQADDRNDE).

Belongs to the CFAP100 family. In terms of assembly, interacts with FAP73; form the modifier of inner arm (MIA) complex.

The protein resides in the cytoplasm. Its subcellular location is the cytoskeleton. It localises to the flagellum axoneme. In terms of biological role, as part of MIA, a complex associated with the outer doublet microtubules of the axoneme, may play a role in ciliary/flagellar motility by regulating the assembly and the activity of axonemal inner dynein arm. The chain is Cilia- and flagella-associated protein 100 from Chlamydomonas reinhardtii (Chlamydomonas smithii).